The sequence spans 242 residues: Tryptophan synthase alpha chain (242 aa).

Residues glutamate 31 and aspartate 42 each act as proton acceptor in the active site.

The protein belongs to the TrpA family. Tetramer of two alpha and two beta chains.

The catalysed reaction is (1S,2R)-1-C-(indol-3-yl)glycerol 3-phosphate + L-serine = D-glyceraldehyde 3-phosphate + L-tryptophan + H2O. It functions in the pathway amino-acid biosynthesis; L-tryptophan biosynthesis; L-tryptophan from chorismate: step 5/5. Functionally, the alpha subunit is responsible for the aldol cleavage of indoleglycerol phosphate to indole and glyceraldehyde 3-phosphate. In Staphylococcus aureus (strain USA300), this protein is Tryptophan synthase alpha chain.